The primary structure comprises 363 residues: 3-isopropylmalate dehydrogenase A (363 aa).

78 to 89 (GPKWGTGAVRPE) lines the NAD(+) pocket. Substrate contacts are provided by arginine 96, arginine 106, arginine 135, and aspartate 222. Residues aspartate 222, aspartate 247, and aspartate 251 each coordinate Mg(2+). 287 to 299 (GSAPDIAGKGIVN) is a binding site for NAD(+).

Belongs to the isocitrate and isopropylmalate dehydrogenases family. In terms of assembly, homodimer. It depends on Mg(2+) as a cofactor. Mn(2+) is required as a cofactor.

Its subcellular location is the cytoplasm. It carries out the reaction (2R,3S)-3-isopropylmalate + NAD(+) = 4-methyl-2-oxopentanoate + CO2 + NADH. The protein operates within amino-acid biosynthesis; L-leucine biosynthesis; L-leucine from 3-methyl-2-oxobutanoate: step 3/4. In terms of biological role, catalyzes the oxidation of 3-carboxy-2-hydroxy-4-methylpentanoate (3-isopropylmalate) to 3-carboxy-4-methyl-2-oxopentanoate. The product decarboxylates to 4-methyl-2 oxopentanoate. This chain is 3-isopropylmalate dehydrogenase A (leu2A), found in Aspergillus niger.